An 864-amino-acid polypeptide reads, in one-letter code: Valine--tRNA ligase (864 aa).

The 'HIGH' region motif lies at 42–52 (PTISGKLHIGH). The 'KMSKS' region signature appears at 589-593 (KMSKS). Residue Lys592 coordinates ATP.

It belongs to the class-I aminoacyl-tRNA synthetase family. ValS type 2 subfamily. Monomer.

The protein localises to the cytoplasm. The enzyme catalyses tRNA(Val) + L-valine + ATP = L-valyl-tRNA(Val) + AMP + diphosphate. Catalyzes the attachment of valine to tRNA(Val). As ValRS can inadvertently accommodate and process structurally similar amino acids such as threonine, to avoid such errors, it has a 'posttransfer' editing activity that hydrolyzes mischarged Thr-tRNA(Val) in a tRNA-dependent manner. The chain is Valine--tRNA ligase from Wolbachia pipientis wMel.